Here is a 90-residue protein sequence, read N- to C-terminus: UPF0237 protein PAE3582 (90 aa).

The 70-residue stretch at 5 to 74 folds into the ACT domain; that stretch reads VVSVLGADRV…LEEEGKRLGV (70 aa).

The protein belongs to the UPF0237 family.

This is UPF0237 protein PAE3582 from Pyrobaculum aerophilum (strain ATCC 51768 / DSM 7523 / JCM 9630 / CIP 104966 / NBRC 100827 / IM2).